Here is a 225-residue protein sequence, read N- to C-terminus: Heptaprenylglyceryl phosphate synthase (225 aa).

K6 provides a ligand contact to sn-glycerol 1-phosphate. Mg(2+) contacts are provided by D8 and T34. Residues 153–158 (YVEYSG), G183, and 203–204 (GN) each bind sn-glycerol 1-phosphate.

The protein belongs to the GGGP/HepGP synthase family. Group I subfamily. In terms of assembly, homodimer. The cofactor is Mg(2+).

It carries out the reaction sn-glycerol 1-phosphate + all-trans-heptaprenyl diphosphate = 3-heptaprenyl-sn-glycero-1-phosphate + diphosphate. It participates in membrane lipid metabolism; glycerophospholipid metabolism. Functionally, prenyltransferase that catalyzes in vivo the transfer of the heptaprenyl moiety of heptaprenyl pyrophosphate (HepPP; 35 carbon atoms) to the C3 hydroxyl of sn-glycerol-1-phosphate (G1P), producing heptaprenylglyceryl phosphate (HepGP). This reaction is an ether-bond-formation step in the biosynthesis of archaea-type G1P-based membrane lipids found in Bacillales. The chain is Heptaprenylglyceryl phosphate synthase from Listeria innocua serovar 6a (strain ATCC BAA-680 / CLIP 11262).